Reading from the N-terminus, the 245-residue chain is Keratin-associated protein 10-12 (245 aa).

A run of 19 repeats spans residues C36–P40, C41–A45, C62–T66, C84–S88, C94–S98, C104–V108, C109–V113, C114–V118, C119–V123, C124–S128, C131–S135, C141–S145, C151–V155, C156–I160, C161–V165, C173–S177, C183–S187, C188–S192, and C214–T218. Residues C36–T218 form a 19 X 5 AA repeats of C-C-X(3) region.

This sequence belongs to the KRTAP type 10 family. As to quaternary structure, interacts with hair keratins. As to expression, restricted to a narrow region of the hair fiber cuticle, lying approximately 20 cell layers above the apex of the dermal papilla of the hair root; not detected in any other tissues.

Functionally, in the hair cortex, hair keratin intermediate filaments are embedded in an interfilamentous matrix, consisting of hair keratin-associated proteins (KRTAP), which are essential for the formation of a rigid and resistant hair shaft through their extensive disulfide bond cross-linking with abundant cysteine residues of hair keratins. The matrix proteins include the high-sulfur and high-glycine-tyrosine keratins. The polypeptide is Keratin-associated protein 10-12 (KRTAP10-12) (Homo sapiens (Human)).